Consider the following 328-residue polypeptide: Carbonic anhydrase-related protein 10 (328 aa).

The Alpha-carbonic anhydrase domain maps to 31-301; it reads GWWAYKEVVQ…LNNRCIRTNI (271 aa).

It belongs to the alpha-carbonic anhydrase family.

In terms of biological role, does not have a catalytic activity. This chain is Carbonic anhydrase-related protein 10 (CA10), found in Macaca fascicularis (Crab-eating macaque).